The sequence spans 219 residues: Octanoyltransferase (219 aa).

A BPL/LPL catalytic domain is found at 24-212 (KFRRECILFL…NLNSFLGPIS (189 aa)). Substrate contacts are provided by residues 69-76 (RGGDFTAH), 140-142 (SIG), and 153-155 (GVA). Cysteine 171 acts as the Acyl-thioester intermediate in catalysis.

It belongs to the LipB family.

It is found in the cytoplasm. It catalyses the reaction octanoyl-[ACP] + L-lysyl-[protein] = N(6)-octanoyl-L-lysyl-[protein] + holo-[ACP] + H(+). It functions in the pathway protein modification; protein lipoylation via endogenous pathway; protein N(6)-(lipoyl)lysine from octanoyl-[acyl-carrier-protein]: step 1/2. Its function is as follows. Catalyzes the transfer of endogenously produced octanoic acid from octanoyl-acyl-carrier-protein onto the lipoyl domains of lipoate-dependent enzymes. Lipoyl-ACP can also act as a substrate although octanoyl-ACP is likely to be the physiological substrate. This Leptospira borgpetersenii serovar Hardjo-bovis (strain JB197) protein is Octanoyltransferase.